The following is a 699-amino-acid chain: MKRRNADCSKLRRPLKRNRITEGIYGSTFLYLKFLVVWALVLLADFVLEFRFEYLWPFWLFIRSVYDSFRYQGLAFSVFFVCVAFTSDIICLLFIPVQWLFFAASTYVWVQYVWHTERGVCLPTVSLWILFVYIEAAIRFKDLKHFHVDLCRPFAAHCIGYPVVTLGFGFKSYVSYKMRLRKQKEVQKENEFYMQLLQQALPPEQQLIQRQEREAEEAAAAAAAAASKSIHDVDSPAVAQNGSAGGKKPSSNTLPELEYREKERGKNESKKQHNHNQNHHSSTSSSILPSVDNKAQEMEYMENHVNSKRLSSSDLLGSTENLLKDEHSSSSSSSTSSNSNKNYKNASGGGGGGGSSSPRGHGTANGSVPSSSGPSSSASSSSKGDRKQKYGGGKNSASHRDPVENCIPNNQLSKPEALVRLEQDVKKLKADLQASRQTEQDLRSQLGSLGTSERSIRSELGQLRQENELLQNKLHNAVQAKQKDKQTLGQLEKRLKAEQEARAAAEKLLAEEKKRKKLEEATAARAVALAAATRGECTESLRRRISELEAECKKLTLDIKVKEDQIRELELKVQELHKYKENEKDTEVLMSALSAMQDKTQHLENSLSAETRIKLDLFSALGDAKRQLEIAQGQILQKDQEIKDLKQKIAEVMAVMPSVVYSADTGSMTPVTPHYSSKFMDTSPSGLDPNASVYQPLKK.

A run of 4 helical transmembrane segments spans residues threonine 28 to leucine 48, alanine 75 to isoleucine 95, valine 120 to phenylalanine 140, and phenylalanine 154 to valine 174. Disordered stretches follow at residues alanine 219 to proline 289, leucine 322 to glutamine 411, leucine 432 to threonine 451, and phenylalanine 679 to lysine 699. 4 N-linked (GlcNAc...) asparagine glycosylation sites follow: asparagine 241, asparagine 267, asparagine 345, and asparagine 365. Residues leucine 257 to lysine 271 are compositionally biased toward basic and acidic residues. The span at serine 329–alanine 346 shows a compositional bias: low complexity. Residues glycine 366 to serine 382 are compositionally biased toward low complexity. Residue asparagine 690 is glycosylated (N-linked (GlcNAc...) asparagine).

The protein belongs to the macoilin family.

It localises to the nucleus membrane. The protein resides in the cell projection. Its subcellular location is the axon. It is found in the rough endoplasmic reticulum membrane. May play a role in the regulation of neuronal activity. This is Macoilin-2 from Danio rerio (Zebrafish).